The sequence spans 199 residues: FMN-dependent NADH:quinone oxidoreductase (199 aa).

FMN contacts are provided by residues S9, S15–S17, and M95–F98.

This sequence belongs to the azoreductase type 1 family. In terms of assembly, homodimer. It depends on FMN as a cofactor.

The enzyme catalyses 2 a quinone + NADH + H(+) = 2 a 1,4-benzosemiquinone + NAD(+). It carries out the reaction N,N-dimethyl-1,4-phenylenediamine + anthranilate + 2 NAD(+) = 2-(4-dimethylaminophenyl)diazenylbenzoate + 2 NADH + 2 H(+). Its function is as follows. Quinone reductase that provides resistance to thiol-specific stress caused by electrophilic quinones. Functionally, also exhibits azoreductase activity. Catalyzes the reductive cleavage of the azo bond in aromatic azo compounds to the corresponding amines. The chain is FMN-dependent NADH:quinone oxidoreductase from Aromatoleum aromaticum (strain DSM 19018 / LMG 30748 / EbN1) (Azoarcus sp. (strain EbN1)).